The following is a 366-amino-acid chain: Phenylalanine dehydrogenase (366 aa).

Arg-45 lines the NAD(+) pocket. Residue Lys-69 participates in L-phenylalanine binding. The active site involves Lys-81. NAD(+) is bound by residues Asp-116, Thr-151, 181–187 (GVGKVGE), 204–205 (DI), 241–242 (AK), and 262–264 (SAN). Residue Asn-264 coordinates L-phenylalanine.

It belongs to the Glu/Leu/Phe/Val dehydrogenases family.

The enzyme catalyses L-phenylalanine + NAD(+) + H2O = 3-phenylpyruvate + NH4(+) + NADH + H(+). The protein operates within amino-acid biosynthesis; L-phenylalanine biosynthesis; L-phenylalanine from phenylpyruvate (PDH route): step 1/1. Its function is as follows. Catalyzes the reversible NAD(+)-dependent oxidative deamination of L-phenylalanine to phenylpyruvate. The protein is Phenylalanine dehydrogenase of Thermoactinomyces intermedius.